The chain runs to 391 residues: tRNA(Met) cytidine acetate ligase (391 aa).

ATP-binding positions include 7-20 (IAEY…HIYQ), Gly101, Asn153, and Arg178.

This sequence belongs to the TmcAL family.

Its subcellular location is the cytoplasm. The enzyme catalyses cytidine(34) in elongator tRNA(Met) + acetate + ATP = N(4)-acetylcytidine(34) in elongator tRNA(Met) + AMP + diphosphate. Its function is as follows. Catalyzes the formation of N(4)-acetylcytidine (ac(4)C) at the wobble position of elongator tRNA(Met), using acetate and ATP as substrates. First activates an acetate ion to form acetyladenylate (Ac-AMP) and then transfers the acetyl group to tRNA to form ac(4)C34. In Latilactobacillus sakei subsp. sakei (strain 23K) (Lactobacillus sakei subsp. sakei), this protein is tRNA(Met) cytidine acetate ligase.